A 165-amino-acid polypeptide reads, in one-letter code: Probable chemoreceptor glutamine deamidase CheD (165 aa).

The protein belongs to the CheD family.

It catalyses the reaction L-glutaminyl-[protein] + H2O = L-glutamyl-[protein] + NH4(+). Its function is as follows. Probably deamidates glutamine residues to glutamate on methyl-accepting chemotaxis receptors (MCPs), playing an important role in chemotaxis. The protein is Probable chemoreceptor glutamine deamidase CheD of Geobacillus kaustophilus (strain HTA426).